We begin with the raw amino-acid sequence, 290 residues long: 4-hydroxy-tetrahydrodipicolinate synthase (290 aa).

Pyruvate is bound at residue threonine 44. The active-site Proton donor/acceptor is the tyrosine 132. Lysine 160 functions as the Schiff-base intermediate with substrate in the catalytic mechanism. Pyruvate is bound at residue isoleucine 202.

This sequence belongs to the DapA family. Homotetramer; dimer of dimers.

It localises to the cytoplasm. The enzyme catalyses L-aspartate 4-semialdehyde + pyruvate = (2S,4S)-4-hydroxy-2,3,4,5-tetrahydrodipicolinate + H2O + H(+). The protein operates within amino-acid biosynthesis; L-lysine biosynthesis via DAP pathway; (S)-tetrahydrodipicolinate from L-aspartate: step 3/4. Its function is as follows. Catalyzes the condensation of (S)-aspartate-beta-semialdehyde [(S)-ASA] and pyruvate to 4-hydroxy-tetrahydrodipicolinate (HTPA). The sequence is that of 4-hydroxy-tetrahydrodipicolinate synthase from Alkaliphilus oremlandii (strain OhILAs) (Clostridium oremlandii (strain OhILAs)).